Consider the following 370-residue polypeptide: Coiled-coil domain-containing protein 89 (370 aa).

The segment at 1–38 (MPQEESAPRMDTPSSEEPLDKQNRKLEDQEEEMGFKEL) is disordered. At threonine 12 the chain carries Phosphothreonine. Positions 18–38 (PLDKQNRKLEDQEEEMGFKEL) are enriched in basic and acidic residues. Residues 19–346 (LDKQNRKLED…YDELRLQSEA (328 aa)) adopt a coiled-coil conformation.

Belongs to the CCDC89 family. In terms of assembly, interacts with HEY1.

The protein resides in the cytoplasm. It localises to the nucleus. This chain is Coiled-coil domain-containing protein 89, found in Bos taurus (Bovine).